Here is a 211-residue protein sequence, read N- to C-terminus: C-type lectin domain family 2 member L (211 aa).

A disordered region spans residues 1 to 53 (MEPAREPPARARPPPPAARPAPAAPRPRSPAEAEARGPEGLLRRSGSGYEGST). Residues 10-28 (RARPPPPAARPAPAAPRPR) show a composition bias toward pro residues. S29 carries the post-translational modification Phosphoserine. A helical transmembrane segment spans residues 66–86 (LLLGAIAVLLFAILVVMSILA). Disulfide bonds link C97-C108, C125-C205, and C184-C197. In terms of domain architecture, C-type lectin spans 104 to 206 (YGRKCYYFSE…CLTTRPWVCS (103 aa)).

It localises to the membrane. The protein is C-type lectin domain family 2 member L (Clec2l) of Rattus norvegicus (Rat).